Reading from the N-terminus, the 546-residue chain is Thermosome subunit beta (546 aa).

Belongs to the TCP-1 chaperonin family. Forms a Heterooligomeric complex of two stacked eight-membered rings.

Its function is as follows. Molecular chaperone; binds unfolded polypeptides in vitro, and has a weak ATPase activity. This Thermococcus kodakarensis (strain ATCC BAA-918 / JCM 12380 / KOD1) (Pyrococcus kodakaraensis (strain KOD1)) protein is Thermosome subunit beta (thsB).